A 344-amino-acid polypeptide reads, in one-letter code: uncharacterized protein (344 aa).

It belongs to the MG414/MG415 family.

This is an uncharacterized protein from Mycoplasma pneumoniae (strain ATCC 29342 / M129 / Subtype 1) (Mycoplasmoides pneumoniae).